We begin with the raw amino-acid sequence, 412 residues long: Arginine biosynthesis bifunctional protein ArgJ (412 aa).

Substrate contacts are provided by Thr-155, Lys-181, Thr-192, Glu-279, Asn-407, and Ser-412. The active-site Nucleophile is Thr-192.

It belongs to the ArgJ family. Heterotetramer of two alpha and two beta chains.

The protein localises to the cytoplasm. The catalysed reaction is N(2)-acetyl-L-ornithine + L-glutamate = N-acetyl-L-glutamate + L-ornithine. The enzyme catalyses L-glutamate + acetyl-CoA = N-acetyl-L-glutamate + CoA + H(+). Its pathway is amino-acid biosynthesis; L-arginine biosynthesis; L-ornithine and N-acetyl-L-glutamate from L-glutamate and N(2)-acetyl-L-ornithine (cyclic): step 1/1. The protein operates within amino-acid biosynthesis; L-arginine biosynthesis; N(2)-acetyl-L-ornithine from L-glutamate: step 1/4. Catalyzes two activities which are involved in the cyclic version of arginine biosynthesis: the synthesis of N-acetylglutamate from glutamate and acetyl-CoA as the acetyl donor, and of ornithine by transacetylation between N(2)-acetylornithine and glutamate. In Aromatoleum aromaticum (strain DSM 19018 / LMG 30748 / EbN1) (Azoarcus sp. (strain EbN1)), this protein is Arginine biosynthesis bifunctional protein ArgJ.